Reading from the N-terminus, the 147-residue chain is Protein phosphatase 1 regulatory subunit 14A (147 aa).

Positions 1–11 (MAAQRLGKRVL) are enriched in basic residues. Residues 1–37 (MAAQRLGKRVLSKLQSPSRARGPGGSPSGLQKRHARV) are disordered. Residue S26 is modified to Phosphoserine. The tract at residues 35 to 120 (ARVTVKYDRR…LLAKLRGLHK (86 aa)) is inhibitory. At T38 the chain carries Phosphothreonine. The disordered stretch occupies residues 118 to 147 (LHKQPGFPQPSPSDDPSLSPRQDPAHTAPP). S128, S134, and S136 each carry phosphoserine.

This sequence belongs to the PP1 inhibitor family.

Its subcellular location is the cytoplasm. Its function is as follows. Inhibitor of PPP1CA. Has over 1000-fold higher inhibitory activity when phosphorylated, creating a molecular switch for regulating the phosphorylation status of PPP1CA substrates and smooth muscle contraction. The sequence is that of Protein phosphatase 1 regulatory subunit 14A (Ppp1r14a) from Rattus norvegicus (Rat).